A 438-amino-acid chain; its full sequence is MSTTTTPYVAFKVKDISLAAWGRKEIELAEAEMPGLMALRAEYKDEQPLKGARIAGCLHMTIQTAVLIETLIALGAEVTWSSCNIFSTQDQAAAAIAAAGISVYAWKGLDEESFDWCIEQTLFFGEERKPLNMILDDGGDLTNMVIDRYPELVAGIKGLSEETTTGVHRLYERVKAGTLPMPAININDSVTKSKFDNKYGCKESAVDAVRRATDLMLAGKRVVVCGYGDVGKGTAASFRGAGSIVTVTEIDPICALQAAMDGYEVKKLNTVIANADIIITTTGNKDIVLGEHFEQMKDKTVVCNIGHFDNEIDMAWLNKNHGASKIEIKPQVDKYNINGKDIIILAEGRLVNLGCATGHPSFVMSNSFTNQTLAQIELWNNSAAYKNEVYMLPKHLDEKVAALHLAKLGVELEVLREDQAAYIGVEVQGPFKPEYYRY.

Substrate contacts are provided by T61, D137, and E162. 163-165 provides a ligand contact to NAD(+); that stretch reads TTT. Substrate-binding residues include K192 and D196. Residues N197, 226 to 231, E249, N284, 305 to 307, and N352 contribute to the NAD(+) site; these read GYGDVG and IGH.

Belongs to the adenosylhomocysteinase family. The cofactor is NAD(+).

The protein resides in the cytoplasm. It catalyses the reaction S-adenosyl-L-homocysteine + H2O = L-homocysteine + adenosine. It functions in the pathway amino-acid biosynthesis; L-homocysteine biosynthesis; L-homocysteine from S-adenosyl-L-homocysteine: step 1/1. Functionally, may play a key role in the regulation of the intracellular concentration of adenosylhomocysteine. This Flavobacterium johnsoniae (strain ATCC 17061 / DSM 2064 / JCM 8514 / BCRC 14874 / CCUG 350202 / NBRC 14942 / NCIMB 11054 / UW101) (Cytophaga johnsonae) protein is Adenosylhomocysteinase.